A 504-amino-acid polypeptide reads, in one-letter code: Maturase K (504 aa).

It belongs to the intron maturase 2 family. MatK subfamily.

Its subcellular location is the plastid. The protein localises to the chloroplast. Usually encoded in the trnK tRNA gene intron. Probably assists in splicing its own and other chloroplast group II introns. The protein is Maturase K of Rorippa amphibia (Great yellow-cress).